A 131-amino-acid polypeptide reads, in one-letter code: Global transcriptional regulator Spx 1 (131 aa).

A disulfide bond links Cys10 and Cys13.

The protein belongs to the ArsC family. Spx subfamily. In terms of assembly, interacts with the C-terminal domain of the alpha subunit of the RNAP.

It is found in the cytoplasm. In terms of biological role, global transcriptional regulator that plays a key role in stress response and exerts either positive or negative regulation of genes. Acts by interacting with the C-terminal domain of the alpha subunit of the RNA polymerase (RNAP). This interaction can enhance binding of RNAP to the promoter region of target genes and stimulate their transcription, or block interaction of RNAP with activator. The sequence is that of Global transcriptional regulator Spx 1 from Bacillus anthracis.